The sequence spans 511 residues: ATP synthase subunit alpha (511 aa).

ATP is bound at residue 170-177; the sequence is GDRQTGKT.

Belongs to the ATPase alpha/beta chains family. As to quaternary structure, F-type ATPases have 2 components, CF(1) - the catalytic core - and CF(0) - the membrane proton channel. CF(1) has five subunits: alpha(3), beta(3), gamma(1), delta(1), epsilon(1). CF(0) has three main subunits: a(1), b(2) and c(9-12). The alpha and beta chains form an alternating ring which encloses part of the gamma chain. CF(1) is attached to CF(0) by a central stalk formed by the gamma and epsilon chains, while a peripheral stalk is formed by the delta and b chains.

It is found in the cell inner membrane. It carries out the reaction ATP + H2O + 4 H(+)(in) = ADP + phosphate + 5 H(+)(out). In terms of biological role, produces ATP from ADP in the presence of a proton gradient across the membrane. The alpha chain is a regulatory subunit. The sequence is that of ATP synthase subunit alpha from Pelagibacter ubique (strain HTCC1062).